Reading from the N-terminus, the 204-residue chain is Large ribosomal subunit protein uL4 (204 aa).

Residues 42–52 (GTKAQKSRSQV) show a composition bias toward polar residues. The disordered stretch occupies residues 42-70 (GTKAQKSRSQVSGTTKKSKKQKGGGARHG).

Belongs to the universal ribosomal protein uL4 family. As to quaternary structure, part of the 50S ribosomal subunit.

Its function is as follows. One of the primary rRNA binding proteins, this protein initially binds near the 5'-end of the 23S rRNA. It is important during the early stages of 50S assembly. It makes multiple contacts with different domains of the 23S rRNA in the assembled 50S subunit and ribosome. In terms of biological role, forms part of the polypeptide exit tunnel. The protein is Large ribosomal subunit protein uL4 of Xylella fastidiosa (strain M12).